Reading from the N-terminus, the 136-residue chain is MLQPKRTKFRKVHKGRNRGIAVGTEVSFGTFGLKAIGRGRLTARQIEAARRAMTRAVKRQGKIWIRVFPDKPITEKPLEVRMGKGKGNVEYWVALIQPGKVLYEMDGVSEEIARHAFALAAAKLPMKTTFVTKTVM.

This sequence belongs to the universal ribosomal protein uL16 family. In terms of assembly, part of the 50S ribosomal subunit.

Binds 23S rRNA and is also seen to make contacts with the A and possibly P site tRNAs. In Haemophilus ducreyi (strain 35000HP / ATCC 700724), this protein is Large ribosomal subunit protein uL16.